Consider the following 145-residue polypeptide: UPF0735 ACT domain-containing protein CKL_0858 (145 aa).

Positions 69–144 constitute an ACT domain; it reads TLGLTLAHKA…SVIKVNLAAV (76 aa).

This sequence belongs to the UPF0735 family.

In Clostridium kluyveri (strain ATCC 8527 / DSM 555 / NBRC 12016 / NCIMB 10680 / K1), this protein is UPF0735 ACT domain-containing protein CKL_0858.